The following is a 196-amino-acid chain: Imidazoleglycerol-phosphate dehydratase (196 aa).

It belongs to the imidazoleglycerol-phosphate dehydratase family.

The protein resides in the cytoplasm. The enzyme catalyses D-erythro-1-(imidazol-4-yl)glycerol 3-phosphate = 3-(imidazol-4-yl)-2-oxopropyl phosphate + H2O. The protein operates within amino-acid biosynthesis; L-histidine biosynthesis; L-histidine from 5-phospho-alpha-D-ribose 1-diphosphate: step 6/9. This Ralstonia pickettii (strain 12J) protein is Imidazoleglycerol-phosphate dehydratase.